Consider the following 716-residue polypeptide: Forkhead box protein P2 (716 aa).

Over residues 1–28 (MMQESATETISNSSMNQNGMSTLSSQLD) the composition is skewed to polar residues. 2 disordered regions span residues 1–45 (MMQE…SEVS) and 286–340 (KHGG…TGAS). The span at 293-306 (TTNNSSSTTSSTTS) shows a compositional bias: low complexity. Polar residues predominate over residues 316–325 (SIVNGQSSVL). A compositionally biased stretch (basic and acidic residues) spans 327–338 (ARRDSSSHEETG). Residues 347–372 (GVCKWPGCESICEDFGQFLKHLNNEH) form a C2H2-type zinc finger. The leucine-zipper stretch occupies residues 389–410 (VQQLEIQLSKERERLQAMMTHL). Positions 423–427 (PLNLV) are CTBP1-binding. A compositionally biased stretch (low complexity) spans 439–460 (TSPQSLPQTPTTPTAPVTPITQ). The tract at residues 439-466 (TSPQSLPQTPTTPTAPVTPITQGPSVIT) is disordered. A DNA-binding region (fork-head) is located at residues 505–595 (RPPFTYATLI…SQKITGSPTL (91 aa)). Disordered regions lie at residues 650–669 (LDHI…QPHI) and 679–716 (VIAE…EDLE). Residues 700 to 716 (LEDDREIEEEPLSEDLE) show a composition bias toward acidic residues.

Forms homodimers and heterodimers with FOXP1 and FOXP4. Dimerization is required for DNA-binding. Interacts with CTBP1. Interacts with FOXP1. Interacts with TBR1. Interacts with ZMYM2.

The protein resides in the nucleus. Functionally, transcriptional repressor that may play a role in the specification and differentiation of lung epithelium. May also play a role in developing neural, gastrointestinal and cardiovascular tissues. Can act with CTBP1 to synergistically repress transcription but CTPBP1 is not essential. Plays a role in synapse formation by regulating SRPX2 levels. The protein is Forkhead box protein P2 (FOXP2) of Pan paniscus (Pygmy chimpanzee).